The chain runs to 275 residues: Esterase AAEL000016 (275 aa).

Residues 1–21 (MMANETAAKSTKSSPTPAVEP) form a disordered region. Positions 7 to 16 (AAKSTKSSPT) are enriched in polar residues. Catalysis depends on charge relay system residues Ser129, Asp187, and His214. Residues 253–275 (LVDDSGPAGNGVHDDDDDDDDSD) are disordered. Residues 266–275 (DDDDDDDDSD) show a composition bias toward acidic residues.

Belongs to the LovG family.

This is Esterase AAEL000016 from Aedes aegypti (Yellowfever mosquito).